Reading from the N-terminus, the 151-residue chain is Methylated-DNA--protein-cysteine methyltransferase (151 aa).

The active-site Nucleophile; methyl group acceptor is the Cys-119.

Belongs to the MGMT family.

It localises to the cytoplasm. The catalysed reaction is a 6-O-methyl-2'-deoxyguanosine in DNA + L-cysteinyl-[protein] = S-methyl-L-cysteinyl-[protein] + a 2'-deoxyguanosine in DNA. It catalyses the reaction a 4-O-methyl-thymidine in DNA + L-cysteinyl-[protein] = a thymidine in DNA + S-methyl-L-cysteinyl-[protein]. Its function is as follows. Involved in the cellular defense against the biological effects of O6-methylguanine (O6-MeG) and O4-methylthymine (O4-MeT) in DNA. Repairs the methylated nucleobase in DNA by stoichiometrically transferring the methyl group to a cysteine residue in the enzyme. This is a suicide reaction: the enzyme is irreversibly inactivated. This Saccharolobus islandicus (strain Y.N.15.51 / Yellowstone #2) (Sulfolobus islandicus) protein is Methylated-DNA--protein-cysteine methyltransferase.